Here is a 439-residue protein sequence, read N- to C-terminus: Glutamate--tRNA ligase 1 (439 aa).

A 'HIGH' region motif is present at residues 6–16 (PSPTGDMHIGN). A 'KMSKS' region motif is present at residues 232–236 (KMSKR). K235 serves as a coordination point for ATP.

Belongs to the class-I aminoacyl-tRNA synthetase family. Glutamate--tRNA ligase type 1 subfamily. Monomer.

It localises to the cytoplasm. It catalyses the reaction tRNA(Glu) + L-glutamate + ATP = L-glutamyl-tRNA(Glu) + AMP + diphosphate. Its function is as follows. Catalyzes the attachment of glutamate to tRNA(Glu) in a two-step reaction: glutamate is first activated by ATP to form Glu-AMP and then transferred to the acceptor end of tRNA(Glu). This chain is Glutamate--tRNA ligase 1, found in Helicobacter acinonychis (strain Sheeba).